The primary structure comprises 488 residues: Rhamnulokinase (488 aa).

11–15 (ASSGR) serves as a coordination point for ATP. Residues Ala-79 and 234–236 (HDT) contribute to the substrate site. Asp-235 (proton acceptor) is an active-site residue. Thr-257 is an ATP binding site. Asn-294 lines the substrate pocket. The ATP site is built by Gln-302 and Gly-401.

Belongs to the rhamnulokinase family. It depends on Mg(2+) as a cofactor.

It catalyses the reaction L-rhamnulose + ATP = L-rhamnulose 1-phosphate + ADP + H(+). It functions in the pathway carbohydrate degradation; L-rhamnose degradation; glycerone phosphate from L-rhamnose: step 2/3. Functionally, involved in the catabolism of L-rhamnose (6-deoxy-L-mannose). Catalyzes the transfer of the gamma-phosphate group from ATP to the 1-hydroxyl group of L-rhamnulose to yield L-rhamnulose 1-phosphate. The sequence is that of Rhamnulokinase from Lactiplantibacillus plantarum (strain ATCC BAA-793 / NCIMB 8826 / WCFS1) (Lactobacillus plantarum).